The sequence spans 49 residues: MRTYNRSLPARAGLTDLGKVTTHTKGPTPMVGLDSVSGQYWDQHAPLAD.

Residues 1–25 (MRTYNRSLPARAGLTDLGKVTTHTK) constitute a propeptide that is removed on maturation. The segment at residues 26–34 (GPTPMVGLD) is a cross-link (isoaspartyl glycine isopeptide (Gly-Asp)).

In terms of processing, this lasso peptide is hydrolyzed to a linear form by the isopeptidase AtxE2, in vitro. The isopeptidase AtxE2 only recognizes the threaded form (but not the unthreaded form).

It localises to the cytoplasm. The protein resides in the secreted. Functionally, shows weak antimicrobial activity against its phylogenetic relative Caulobacter crescentus. Does not show activity against other bacteria tested (E.coli, Vibrio sp, Burkhoderia thailandensis, and Salmonella newport). This chain is Astexin-3, found in Asticcacaulis excentricus (strain ATCC 15261 / DSM 4724 / KCTC 12464 / NCIMB 9791 / VKM B-1370 / CB 48).